The chain runs to 490 residues: Solute carrier family 2, facilitated glucose transporter member 1 (490 aa).

Residues 1–10 are Cytoplasmic-facing; that stretch reads MESGSKMTAR. The chain crosses the membrane as a helical span at residues 11–32; it reads LMLAVGGAVLGSLQFGYNTGVI. At 33-65 the chain is on the extracellular side; it reads NRPQKVIEDFYNHTWLYRYEEPISPATLTTLWS. N-linked (GlcNAc...) asparagine glycosylation is present at Asn-44. A helical transmembrane segment spans residues 66-86; it reads LSVAIFSVGGMIGSFSVGLFV. The Cytoplasmic segment spans residues 87–89; the sequence is NRF. A helical transmembrane segment spans residues 90–111; sequence GRRNSMLMSNILAFLAAVLMGF. Over 112–119 the chain is Extracellular; that stretch reads SKMALSFE. The helical transmembrane segment at 120 to 143 threads the bilayer; the sequence is MLILGRFIIGLYSGLTTGFVPMYV. The Cytoplasmic portion of the chain corresponds to 144 to 154; the sequence is GEVSPTALRGA. The chain crosses the membrane as a helical span at residues 155-175; it reads LGTFHQLGIVLGILIAQVFGL. A D-glucose-binding site is contributed by Gln-160. Over 176 to 184 the chain is Extracellular; the sequence is DLIMGNDSL. The helical transmembrane segment at 185–205 threads the bilayer; it reads WPLLLGFIFVPALLQCIILPF. At 206-270 the chain is on the cytoplasmic side; it reads APESPRFLLI…LFRSPMYRQP (65 aa). Residues 271–292 traverse the membrane as a helical segment; sequence ILIAIVLQLSQQLSGINAVFYY. Residues 281 to 282 and Asn-287 each bind D-glucose; that span reads QQ. The Extracellular segment spans residues 293-305; that stretch reads STSIFEKSGVEQP. Residues 306–327 form a helical membrane-spanning segment; sequence VYATIGSGVVNTAFTVVSLFVV. Asn-316 is a binding site for D-glucose. The Cytoplasmic portion of the chain corresponds to 328-333; that stretch reads ERAGRR. The helical transmembrane segment at 334–354 threads the bilayer; sequence TLHLIGLAGMAGCAILMTIAL. At 355-364 the chain is on the extracellular side; that stretch reads TLLDQMPWMS. A helical transmembrane segment spans residues 365-387; sequence YLSIVAIFGFVAFFEIGPGPIPW. Residues Glu-379 and Trp-387 each coordinate D-glucose. Topologically, residues 388–400 are cytoplasmic; the sequence is FIVAELFSQGPRP. A helical membrane pass occupies residues 401-421; the sequence is AAFAVAGLSNWTSNFIVGMGF. Over 422-428 the chain is Extracellular; sequence QYIAQLC. The chain crosses the membrane as a helical span at residues 429–449; the sequence is GSYVFIIFTVLLVLFFIFTYF. Topologically, residues 450-490 are cytoplasmic; the sequence is KVPETKGRTFDEIAYRFRQGGASQSDKTPDEFHSLGADSQV. Positions 470 to 490 are disordered; that stretch reads GASQSDKTPDEFHSLGADSQV.

It belongs to the major facilitator superfamily. Sugar transporter (TC 2.A.1.1) family. Glucose transporter subfamily. As to quaternary structure, interacts with isoform 1 of BSG. As to expression, retinal cones (at protein level).

The protein resides in the cell membrane. The protein localises to the photoreceptor inner segment. The enzyme catalyses D-glucose(out) = D-glucose(in). Functionally, facilitative glucose transporter, which is responsible for constitutive or basal glucose uptake. Has a very broad substrate specificity; can transport a wide range of aldoses including both pentoses and hexoses. Most important energy carrier of the brain: present at the blood-brain barrier and assures the energy-independent, facilitative transport of glucose into the brain. In association with BSG and NXNL1, promotes retinal cone survival by increasing glucose uptake into photoreceptors. Required for mesendoderm differentiation. The chain is Solute carrier family 2, facilitated glucose transporter member 1 from Gallus gallus (Chicken).